The primary structure comprises 382 residues: Dual-specificity RNA methyltransferase RlmN (382 aa).

E95 (proton acceptor) is an active-site residue. Residues 101 to 348 (EDDRGTLCIS…TTVRKTRGDD (248 aa)) form the Radical SAM core domain. C108 and C353 are oxidised to a cystine. [4Fe-4S] cluster is bound by residues C115, C119, and C122. S-adenosyl-L-methionine-binding positions include 179–180 (GE), S211, 233–235 (SLH), and N310. C353 (S-methylcysteine intermediate) is an active-site residue.

This sequence belongs to the radical SAM superfamily. RlmN family. Requires [4Fe-4S] cluster as cofactor.

Its subcellular location is the cytoplasm. It carries out the reaction adenosine(2503) in 23S rRNA + 2 reduced [2Fe-2S]-[ferredoxin] + 2 S-adenosyl-L-methionine = 2-methyladenosine(2503) in 23S rRNA + 5'-deoxyadenosine + L-methionine + 2 oxidized [2Fe-2S]-[ferredoxin] + S-adenosyl-L-homocysteine. It catalyses the reaction adenosine(37) in tRNA + 2 reduced [2Fe-2S]-[ferredoxin] + 2 S-adenosyl-L-methionine = 2-methyladenosine(37) in tRNA + 5'-deoxyadenosine + L-methionine + 2 oxidized [2Fe-2S]-[ferredoxin] + S-adenosyl-L-homocysteine. In terms of biological role, specifically methylates position 2 of adenine 2503 in 23S rRNA and position 2 of adenine 37 in tRNAs. m2A2503 modification seems to play a crucial role in the proofreading step occurring at the peptidyl transferase center and thus would serve to optimize ribosomal fidelity. The sequence is that of Dual-specificity RNA methyltransferase RlmN from Bordetella pertussis (strain Tohama I / ATCC BAA-589 / NCTC 13251).